A 341-amino-acid polypeptide reads, in one-letter code: tRNA N6-adenosine threonylcarbamoyltransferase (341 aa).

Positions 119 and 123 each coordinate Fe cation. Residues 141–145 (MVSGG), D174, G187, and N279 contribute to the substrate site. Position 307 (D307) interacts with Fe cation.

It belongs to the KAE1 / TsaD family. Fe(2+) is required as a cofactor.

It localises to the cytoplasm. The catalysed reaction is L-threonylcarbamoyladenylate + adenosine(37) in tRNA = N(6)-L-threonylcarbamoyladenosine(37) in tRNA + AMP + H(+). Required for the formation of a threonylcarbamoyl group on adenosine at position 37 (t(6)A37) in tRNAs that read codons beginning with adenine. Is involved in the transfer of the threonylcarbamoyl moiety of threonylcarbamoyl-AMP (TC-AMP) to the N6 group of A37, together with TsaE and TsaB. TsaD likely plays a direct catalytic role in this reaction. The sequence is that of tRNA N6-adenosine threonylcarbamoyltransferase from Oenococcus oeni (strain ATCC BAA-331 / PSU-1).